Here is a 121-residue protein sequence, read N- to C-terminus: Small ribosomal subunit protein uS13 (121 aa).

Residues 91–121 (HRMSLPVRGQRTRTNARTRRGSRKTVAGRKK) are disordered. Positions 100 to 121 (QRTRTNARTRRGSRKTVAGRKK) are enriched in basic residues.

The protein belongs to the universal ribosomal protein uS13 family. As to quaternary structure, part of the 30S ribosomal subunit. Forms a loose heterodimer with protein S19. Forms two bridges to the 50S subunit in the 70S ribosome.

Its function is as follows. Located at the top of the head of the 30S subunit, it contacts several helices of the 16S rRNA. In the 70S ribosome it contacts the 23S rRNA (bridge B1a) and protein L5 of the 50S subunit (bridge B1b), connecting the 2 subunits; these bridges are implicated in subunit movement. Contacts the tRNAs in the A and P-sites. This is Small ribosomal subunit protein uS13 from Prochlorococcus marinus (strain MIT 9301).